The primary structure comprises 146 residues: Large ribosomal subunit protein uL15 (146 aa).

Residues 1–13 (MKLHELKAAEGSR) show a composition bias toward basic and acidic residues. The tract at residues 1-56 (MKLHELKAAEGSRRVRNRVGRGAGSGNGKTSGRGQKGQKARSGGGVRPGFEGGQLP) is disordered. 2 stretches are compositionally biased toward gly residues: residues 21–35 (RGAG…GRGQ) and 42–52 (SGGGVRPGFEG).

It belongs to the universal ribosomal protein uL15 family. Part of the 50S ribosomal subunit.

Binds to the 23S rRNA. The polypeptide is Large ribosomal subunit protein uL15 (Staphylococcus haemolyticus (strain JCSC1435)).